The sequence spans 307 residues: Leucine-rich repeat-containing protein 25 (307 aa).

The first 20 residues, 1 to 20 (MGGPLMWALLLPLLLHQAGS), serve as a signal peptide directing secretion. Residues 21-168 (QTSSCSVLSG…SCPSGLTKIA (148 aa)) lie on the Extracellular side of the membrane. N-linked (GlcNAc...) asparagine glycans are attached at residues Asn44 and Asn56. LRR repeat units lie at residues 63–86 (SVQL…RDLE) and 87–110 (QLQL…XXGC). N-linked (GlcNAc...) asparagine glycans are attached at residues Asn95, Asn132, and Asn151. A helical transmembrane segment spans residues 169 to 189 (IGALAASGSLLLVLAIAGPVL). Over 190–307 (AWRFCRHRMD…DDEEYVVPGR (118 aa)) the chain is Cytoplasmic. The interval 205-249 (TWASQDGSRSGSGRQPRYSSQGRRPKSPANTPPRSSTPDYENVFV) is disordered. Positions 211–226 (GSRSGSGRQPRYSSQG) are enriched in low complexity. Residues 232–243 (PANTPPRSSTPD) are compositionally biased toward polar residues. Tyr286 is subject to Phosphotyrosine.

Interacts with RIGI. Interacts with SQSTM1. Interacts with p65/RELA; this interaction promotes the degradation of RELA through autophagy.

The protein localises to the membrane. It is found in the cytoplasm. Its function is as follows. Plays a role in the inhibition of RLR-mediated type I interferon signaling pathway by targeting RIGI for autophagic degradation. Interacts specifically with ISG15-associated RIGI to promote interaction between RIGI and the autophagic cargo receptor p62/SQSTM1 to mediate RIGI degradation via selective autophagy. Plays also a role in the inhibition of NF-kappa-B signaling pathway and inflammatory response by promoting the degradation of p65/RELA. This chain is Leucine-rich repeat-containing protein 25 (LRRC25), found in Bos taurus (Bovine).